Consider the following 490-residue polypeptide: Aspartyl aminopeptidase 4 (490 aa).

Position 97 (histidine 97) interacts with Zn(2+). Residue histidine 173 coordinates substrate. 4 residues coordinate Zn(2+): aspartate 273, glutamate 308, glutamate 309, and aspartate 362. Glutamate 308 serves as a coordination point for substrate. Positions 362, 365, 390, and 397 each coordinate substrate. Histidine 456 provides a ligand contact to Zn(2+).

Belongs to the peptidase M18 family. Tetrahedron-shaped homododecamer built from six homodimers. Zn(2+) is required as a cofactor.

The protein localises to the cytoplasm. It localises to the vacuole lumen. The catalysed reaction is Release of an N-terminal aspartate or glutamate from a peptide, with a preference for aspartate.. Its activity is regulated as follows. The metalloproteases inhibitors EDTA and 1.10-phenanthroline both inhibit the activity, whereas bestatin, an inhibitor of most aminopeptidases, does not affect enzyme activity. Functionally, aspartyl aminopeptidase that contributes to peptide degradation both in the cytosol and the vacuole. Cells may respond to environmental conditions by changing the distributions of the cytosolic enzyme to the vacuole when cells need more active vacuolar degradation. This is Aspartyl aminopeptidase 4 (APE4) from Saccharomyces cerevisiae (strain ATCC 204508 / S288c) (Baker's yeast).